A 93-amino-acid chain; its full sequence is Translation initiation factor IF-1 (93 aa).

One can recognise an S1-like domain in the interval 1 to 72 (MAKEELIQFE…EKGRLIFRHK (72 aa)). Residues 70 to 93 (RHKDERPGGGPPRGAPPRGQFRRR) form a disordered region.

The protein belongs to the IF-1 family. In terms of assembly, component of the 30S ribosomal translation pre-initiation complex which assembles on the 30S ribosome in the order IF-2 and IF-3, IF-1 and N-formylmethionyl-tRNA(fMet); mRNA recruitment can occur at any time during PIC assembly.

The protein localises to the cytoplasm. Its function is as follows. One of the essential components for the initiation of protein synthesis. Stabilizes the binding of IF-2 and IF-3 on the 30S subunit to which N-formylmethionyl-tRNA(fMet) subsequently binds. Helps modulate mRNA selection, yielding the 30S pre-initiation complex (PIC). Upon addition of the 50S ribosomal subunit IF-1, IF-2 and IF-3 are released leaving the mature 70S translation initiation complex. This chain is Translation initiation factor IF-1, found in Rhodopseudomonas palustris (strain BisB18).